We begin with the raw amino-acid sequence, 263 residues long: N-acyl homoserine lactonase AttM (263 aa).

Residues His-103, His-105, Asp-107, His-108, His-180, Asp-202, and His-247 each coordinate Zn(2+).

It belongs to the metallo-beta-lactamase superfamily. Zn(2+) serves as cofactor.

It catalyses the reaction an N-acyl-L-homoserine lactone + H2O = an N-acyl-L-homoserine + H(+). The protein is N-acyl homoserine lactonase AttM (attM) of Rhizobium radiobacter (Agrobacterium tumefaciens).